Reading from the N-terminus, the 194-residue chain is Oligoribonuclease (194 aa).

Positions 11-174 constitute an Exonuclease domain; sequence LIWIDLEMTG…SDVRDSIDEL (164 aa). The active site involves tyrosine 132.

This sequence belongs to the oligoribonuclease family.

It is found in the cytoplasm. 3'-to-5' exoribonuclease specific for small oligoribonucleotides. This Xanthomonas campestris pv. campestris (strain ATCC 33913 / DSM 3586 / NCPPB 528 / LMG 568 / P 25) protein is Oligoribonuclease.